Consider the following 946-residue polypeptide: MRLLICLTLLGLVCGNPVQLTDNSIALQNTYDNYVLPGESFPTFYDVQLFFDPEYEASFNGTVAIRVVPRIATQEIVLHAMEMEILSIRAYSDLPSDDNLNENLFSSYTLATDDTHLLKIQFTRVLDALQPITVEISYSAQYAPNMFGVYVSRYVENGATVSLVTSQLQPTFARRAFPCYDEPALKAVFRTTIYAPPAYNVVETNMPLRTDSLKSDRPGFTKHEFQDTLVMSSYLLAYLVSKFDYISNENNPTYDKSMKVFSRPGTQNTAEFALDFGQKNMVELEKYTEFPYAFPKIDKVAVPDFAAGAMENWGLVIYREIALLVQEGVTTTSTLQGIGRIISHENTHQWFGNEVGPDSWTYTWLNEGFANFFESFATDLVLPEWRMMDQFVINMQNVFQSDAVLSVNPITFEVRTPSQILGTFNSVAYQKSGSVIRMMQHFLTPEIFRKSLALYISRMSRKAAKPTDLFEAIQEVVDASDHSIRWRLSIIMNRWTQQGGFPVVTVRRSAPSAQSFVITQRRFLTDSTQESNTVWNVPLNWVLSTDVNFNDTRPMAWLPPQLAAEAVQVPGLQNAEWFIVNKQQTGYYRVNYDPENWRALAKVLNDTHEIIHLLNRAQLIDDSFNLARNGRLDYSLAFDLSRYLVQERDYIPWAAANAAFNYLNSVLSGSSVHPLFQEYLLFLTAPLYQRLGFNAATGEEHVTPFHRNIILNINCLHGNEDCVSTAETLLQNFRDNPTQTLNPDIQTTVFCSGLRGGDVDNFNFLWARYTATQDSSEQSILLNALGCTSNADRRDFLFSQVIASDSQVREQDRHSVLVSAINSGPDNMNAALDFVLENFANIQPNVQGLTGTTNILNAFARTLTTQEHANKIDEFSNKYANVFTAGEMASVAAIKENIAASITWNSQNAATVEAWLRKNFGTDGASTVSASITIIISAMVAIYNIL.

Positions 1–15 (MRLLICLTLLGLVCG) are cleaved as a signal peptide. N-linked (GlcNAc...) asparagine glycosylation occurs at Asn-60. Residue 308 to 312 (GAMEN) participates in substrate binding. His-344 contributes to the Zn(2+) binding site. The Proton acceptor role is filled by Glu-345. Zn(2+)-binding residues include His-348 and Glu-367. N-linked (GlcNAc...) asparagine glycans are attached at residues Asn-550 and Asn-605. 2 cysteine pairs are disulfide-bonded: Cys-715-Cys-722 and Cys-751-Cys-787.

Belongs to the peptidase M1 family. Zn(2+) is required as a cofactor.

It localises to the cell membrane. It catalyses the reaction Release of an N-terminal amino acid, Xaa-|-Yaa- from a peptide, amide or arylamide. Xaa is preferably Ala, but may be most amino acids including Pro (slow action). When a terminal hydrophobic residue is followed by a prolyl residue, the two may be released as an intact Xaa-Pro dipeptide.. This is Aminopeptidase N (APN1) from Plutella xylostella (Diamondback moth).